Here is a 233-residue protein sequence, read N- to C-terminus: 5'-methylthioadenosine/S-adenosylhomocysteine nucleosidase (233 aa).

Glu12 acts as the Proton acceptor in catalysis. Substrate contacts are provided by residues Gly78, Ile153, and 174–175 (ME). Catalysis depends on Asp198, which acts as the Proton donor.

The protein belongs to the PNP/UDP phosphorylase family. MtnN subfamily.

It carries out the reaction S-adenosyl-L-homocysteine + H2O = S-(5-deoxy-D-ribos-5-yl)-L-homocysteine + adenine. The enzyme catalyses S-methyl-5'-thioadenosine + H2O = 5-(methylsulfanyl)-D-ribose + adenine. The catalysed reaction is 5'-deoxyadenosine + H2O = 5-deoxy-D-ribose + adenine. Its pathway is amino-acid biosynthesis; L-methionine biosynthesis via salvage pathway; S-methyl-5-thio-alpha-D-ribose 1-phosphate from S-methyl-5'-thioadenosine (hydrolase route): step 1/2. Catalyzes the irreversible cleavage of the glycosidic bond in both 5'-methylthioadenosine (MTA) and S-adenosylhomocysteine (SAH/AdoHcy) to adenine and the corresponding thioribose, 5'-methylthioribose and S-ribosylhomocysteine, respectively. Also cleaves 5'-deoxyadenosine, a toxic by-product of radical S-adenosylmethionine (SAM) enzymes, into 5-deoxyribose and adenine. This chain is 5'-methylthioadenosine/S-adenosylhomocysteine nucleosidase, found in Exiguobacterium sp. (strain ATCC BAA-1283 / AT1b).